Here is a 168-residue protein sequence, read N- to C-terminus: Transcription antitermination protein NusB (168 aa).

The protein belongs to the NusB family.

Functionally, involved in transcription antitermination. Required for transcription of ribosomal RNA (rRNA) genes. Binds specifically to the boxA antiterminator sequence of the ribosomal RNA (rrn) operons. The sequence is that of Transcription antitermination protein NusB from Bradyrhizobium sp. (strain ORS 278).